The chain runs to 715 residues: ATP-dependent DNA helicase Hel308 (715 aa).

Positions 8-36 (MPIEDLKLPSNVIEIIKKRGIKKLNPPQT) match the Q motif motif. ATP-binding positions include Gln-35 and 53–60 (SPTGSGKT). The 164-residue stretch at 40–203 (KKGLLEGNRL…WLGAEPVATN (164 aa)) folds into the Helicase ATP-binding domain. The DEAH box motif lies at 152–155 (DELH). A Helicase C-terminal domain is found at 236–442 (HGDDAIIAYT…ERAFYTFLLG (207 aa)).

It belongs to the helicase family. Hel308 subfamily. Monomer.

The enzyme catalyses Couples ATP hydrolysis with the unwinding of duplex DNA by translocating in the 3'-5' direction.. It carries out the reaction ATP + H2O = ADP + phosphate + H(+). DNA-dependent ATPase and 3'-5' DNA helicase that may be involved in repair of stalled replication forks. A low processivity 3'-5' helicase. Unwinds short dsDNA substrates with 3'-overhangs (25 bp dsDNA with 25 base overhang), less active on longer dsDNA substrates. Also unwinds the lagging strand of a stalled replication fork (but the leading strand was not tested). Binds ssDNA, but dsDNA about 35-fold less well. Able to displace streptavidin from biotinylated ssDNA, which is partially inhibited by DNA-binding proteins, suggesting it may play a role in stripping proteins from stalled replication forks. This Saccharolobus solfataricus (strain 98/2) (Sulfolobus solfataricus) protein is ATP-dependent DNA helicase Hel308.